The sequence spans 395 residues: F-box/kelch-repeat protein SKIP25 (395 aa).

A disordered region spans residues methionine 1 to glycine 29. Positions alanine 34–leucine 79 constitute an F-box domain. 5 Kelch repeats span residues alanine 81–proline 129, leucine 147–glycine 194, isoleucine 196–glutamate 245, alanine 246–glutamate 299, and isoleucine 301–threonine 342.

As to quaternary structure, part of a SCF (ASK-cullin-F-box) protein ligase complex. Interacts with SKP1A/ASK1.

The protein resides in the nucleus. It participates in protein modification; protein ubiquitination. Component of SCF(ASK-cullin-F-box) E3 ubiquitin ligase complexes, which may mediate the ubiquitination and subsequent proteasomal degradation of target proteins. The chain is F-box/kelch-repeat protein SKIP25 (SKIP25) from Arabidopsis thaliana (Mouse-ear cress).